Here is a 399-residue protein sequence, read N- to C-terminus: L-methionine gamma-lyase (399 aa).

Pyridoxal 5'-phosphate contacts are provided by residues 59–61 (YTR) and 89–90 (GI). Tyr114 lines the substrate pocket. 209–211 (SAT) is a pyridoxal 5'-phosphate binding site. Lys212 carries the post-translational modification N6-(pyridoxal phosphate)lysine. Arg376 is a substrate binding site.

The protein belongs to the trans-sulfuration enzymes family. L-methionine gamma-lyase subfamily. In terms of assembly, homotetramer; dimer of active dimers. It depends on pyridoxal 5'-phosphate as a cofactor.

It catalyses the reaction L-methionine + H2O = methanethiol + 2-oxobutanoate + NH4(+). It carries out the reaction L-homocysteine + H2O = 2-oxobutanoate + hydrogen sulfide + NH4(+) + H(+). Its function is as follows. Catalyzes the alpha,gamma-elimination of L-methionine to produce methanethiol, 2-oxobutanoate and ammonia; methanethiol (methyl mercaptan) is considered to be one of the main causes of the oral malodor in periodontal disease and may also play a role in the pathogenicity of P.gingivalis in that disease. Is also able to catalyze the alpha,gamma-elimination of L-homocysteine. The chain is L-methionine gamma-lyase from Porphyromonas gingivalis (strain ATCC BAA-308 / W83).